Here is a 400-residue protein sequence, read N- to C-terminus: Enoyl-[acyl-carrier-protein] reductase [NADH] (400 aa).

NAD(+) contacts are provided by residues 48–53, 74–75, 111–112, and 139–140; these read GASTGY, FE, DA, and LA. Residue Tyr-225 participates in substrate binding. Residue Tyr-235 is the Proton donor of the active site. NAD(+) is bound by residues Lys-244 and 273–275; that span reads VVT.

The protein belongs to the TER reductase family. In terms of assembly, monomer.

The enzyme catalyses a 2,3-saturated acyl-[ACP] + NAD(+) = a (2E)-enoyl-[ACP] + NADH + H(+). It functions in the pathway lipid metabolism; fatty acid biosynthesis. In terms of biological role, involved in the final reduction of the elongation cycle of fatty acid synthesis (FAS II). Catalyzes the reduction of a carbon-carbon double bond in an enoyl moiety that is covalently linked to an acyl carrier protein (ACP). This Burkholderia cenocepacia (strain ATCC BAA-245 / DSM 16553 / LMG 16656 / NCTC 13227 / J2315 / CF5610) (Burkholderia cepacia (strain J2315)) protein is Enoyl-[acyl-carrier-protein] reductase [NADH].